The sequence spans 205 residues: GTP cyclohydrolase 1 (205 aa).

3 residues coordinate Zn(2+): Cys-93, His-96, and Cys-166.

Belongs to the GTP cyclohydrolase I family. Homomer.

It catalyses the reaction GTP + H2O = 7,8-dihydroneopterin 3'-triphosphate + formate + H(+). The protein operates within cofactor biosynthesis; 7,8-dihydroneopterin triphosphate biosynthesis; 7,8-dihydroneopterin triphosphate from GTP: step 1/1. The polypeptide is GTP cyclohydrolase 1 (Mycobacterium leprae (strain Br4923)).